Consider the following 261-residue polypeptide: Cytochrome c oxidase subunit 3 (261 aa).

The Mitochondrial matrix segment spans residues 1-15 (MTHQTHAYHMVNPSP). Residues 16–34 (WPLTGALSALLMTSGLTMW) form a helical membrane-spanning segment. Topologically, residues 35–40 (FHFNSM) are mitochondrial intermembrane. The chain crosses the membrane as a helical span at residues 41–66 (LLLSLGLLTNTLTMYQWWRDIIREST). Over 67-72 (FQGHHT) the chain is Mitochondrial matrix. Residues 73–105 (SVVQKGLRYGMILFIISEVLFFTGFFWAFYHSS) form a helical membrane-spanning segment. Residues 106-128 (LAPTPELGGCWPPTGIHPLNPLE) are Mitochondrial intermembrane-facing. Residues 129–152 (VPLLNTSILLASGVSITWAHHSLM) traverse the membrane as a helical segment. The Mitochondrial matrix portion of the chain corresponds to 153–155 (EGD). A helical transmembrane segment spans residues 156-183 (RKHMIQALSITIALGVYFTLLQASEYYE). The Mitochondrial intermembrane portion of the chain corresponds to 184–190 (APFTISD). Residues 191–223 (GVYGSTFFVATGFHGLHVIIGSTFLAVCLLRQL) traverse the membrane as a helical segment. Topologically, residues 224–232 (KFHFTSNHH) are mitochondrial matrix. Residues 233–256 (FGFEAAAWYWHFVDVVWLFLYVSI) traverse the membrane as a helical segment. Residues 257-261 (YWWGS) lie on the Mitochondrial intermembrane side of the membrane.

It belongs to the cytochrome c oxidase subunit 3 family. Component of the cytochrome c oxidase (complex IV, CIV), a multisubunit enzyme composed of 14 subunits. The complex is composed of a catalytic core of 3 subunits MT-CO1, MT-CO2 and MT-CO3, encoded in the mitochondrial DNA, and 11 supernumerary subunits COX4I, COX5A, COX5B, COX6A, COX6B, COX6C, COX7A, COX7B, COX7C, COX8 and NDUFA4, which are encoded in the nuclear genome. The complex exists as a monomer or a dimer and forms supercomplexes (SCs) in the inner mitochondrial membrane with NADH-ubiquinone oxidoreductase (complex I, CI) and ubiquinol-cytochrome c oxidoreductase (cytochrome b-c1 complex, complex III, CIII), resulting in different assemblies (supercomplex SCI(1)III(2)IV(1) and megacomplex MCI(2)III(2)IV(2)).

Its subcellular location is the mitochondrion inner membrane. It carries out the reaction 4 Fe(II)-[cytochrome c] + O2 + 8 H(+)(in) = 4 Fe(III)-[cytochrome c] + 2 H2O + 4 H(+)(out). Functionally, component of the cytochrome c oxidase, the last enzyme in the mitochondrial electron transport chain which drives oxidative phosphorylation. The respiratory chain contains 3 multisubunit complexes succinate dehydrogenase (complex II, CII), ubiquinol-cytochrome c oxidoreductase (cytochrome b-c1 complex, complex III, CIII) and cytochrome c oxidase (complex IV, CIV), that cooperate to transfer electrons derived from NADH and succinate to molecular oxygen, creating an electrochemical gradient over the inner membrane that drives transmembrane transport and the ATP synthase. Cytochrome c oxidase is the component of the respiratory chain that catalyzes the reduction of oxygen to water. Electrons originating from reduced cytochrome c in the intermembrane space (IMS) are transferred via the dinuclear copper A center (CU(A)) of subunit 2 and heme A of subunit 1 to the active site in subunit 1, a binuclear center (BNC) formed by heme A3 and copper B (CU(B)). The BNC reduces molecular oxygen to 2 water molecules using 4 electrons from cytochrome c in the IMS and 4 protons from the mitochondrial matrix. In Sus scrofa (Pig), this protein is Cytochrome c oxidase subunit 3 (MT-CO3).